Here is a 2171-residue protein sequence, read N- to C-terminus: ATP-binding cassette sub-family C member Sur (2171 aa).

Residues 1-36 (MKQLFNIIHCDHLNGHVRSIYDNLNTDICGIDRVRR) are Extracellular-facing. The chain crosses the membrane as a helical span at residues 37–57 (VFTFFSIFLLLFGLMFVCSRY). At 58-71 (KKCHKTLLTFHNGR) the chain is on the cytoplasmic side. A helical membrane pass occupies residues 72–92 (AAISLLLLALNSFDLARIFLP). Residues 93–112 (HQNVRNLNRLFQSSPRDLNY) are Extracellular-facing. Residues 113–133 (LVVIGSGELWNALFSTLLTLM) form a helical membrane-spanning segment. At 134–145 (LMLYHRMVERKK) the chain is on the cytoplasmic side. Residues 146–166 (ATVFLYASTAVEALTFALLSN) form a helical membrane-spanning segment. At 167–182 (ELFELVRYEDFLELQT) the chain is on the extracellular side. A helical transmembrane segment spans residues 183–203 (CLVAMSAMCMVSLAMLDGLTV). The Cytoplasmic portion of the chain corresponds to 204-224 (YKECYHDDYLDDYGKIGYKHS). Residues 225–245 (MATFYSKSCFWWLTPLLWLGY) traverse the membrane as a helical segment. Topologically, residues 246 to 299 (KEPLELEDLGQMKLEDSARSHYDHFLYIYTEKKKKSNSSPSLWYCYIKNSWQMF) are extracellular. A helical membrane pass occupies residues 300–320 (ALGGILKLAGDLFALIGPLAI). Over 321-447 (QKIVEYIEQL…MTEDTRNIME (127 aa)) the chain is Cytoplasmic. In terms of domain architecture, ABC transmembrane type-1 1 spans 344 to 622 (NEVANVLLST…FPITVPIIIA (279 aa)). The interval 388–434 (DSSDSAGQVQSTSSTSDEKQKNDDSMATPEHVDNPSEPNISHDIGSI) is disordered. The span at 389–402 (SSDSAGQVQSTSST) shows a compositional bias: polar residues. The span at 403–421 (SDEKQKNDDSMATPEHVDN) shows a compositional bias: basic and acidic residues. The chain crosses the membrane as a helical span at residues 448 to 468 (FFLIIHYAWAIPFKIAVVIYL). Topologically, residues 469–474 (LYMNLG) are extracellular. The chain crosses the membrane as a helical span at residues 475–495 (ISAVIGSIACIVIMTPLQFFI). The Cytoplasmic segment spans residues 496-562 (GNAMSKNAEV…KDATFWTLMA (67 aa)). Residues 563–583 (VLTHIATVLITFVTLGVYVWL) traverse the membrane as a helical segment. Residues 584–600 (HRDQEFDLNASRLFSSL) lie on the Extracellular side of the membrane. A helical transmembrane segment spans residues 601-621 (ALFQQLTVPLLIFPITVPIII). Over 622-1409 (AARVSTRRLE…KYGKISDDIY (788 aa)) the chain is Cytoplasmic. The 230-residue stretch at 785–1014 (VSINDGLFTW…QPRITAEWNA (230 aa)) folds into the ABC transporter 1 domain. 822–829 (GKNGSGKT) provides a ligand contact to ATP. Residues 1141 to 1151 (RRRHTLGRRGS) show a composition bias toward basic residues. 2 disordered regions span residues 1141-1177 (RRRHTLGRRGSRNTNSSHRLSGLSTLTATSESSSISG) and 1209-1265 (PRVQ…DHVR). Residues 1160 to 1176 (LSGLSTLTATSESSSIS) show a composition bias toward low complexity. Polar residues predominate over residues 1212–1232 (QSWQPPQHVTHHQPLSRNASS). The span at 1242–1251 (DVKKSEEARR) shows a compositional bias: basic and acidic residues. Residues 1410–1430 (LMYIRAAGLPIITIFFITALI) form a helical membrane-spanning segment. In terms of domain architecture, ABC transmembrane type-1 2 spans 1421-1715 (ITIFFITALI…AVTKSPSELR (295 aa)). Residues 1431–1468 (WQCLRVYTDIWLQQWSNVHGRVASKGHVVLHPSEQDHE) lie on the Extracellular side of the membrane. Residues 1469 to 1489 (VTYYFRMYAAISCVCIIMALV) traverse the membrane as a helical segment. The Cytoplasmic segment spans residues 1490–1558 (STPAGQYAGC…QRLLQFTLLC (69 aa)). The helical transmembrane segment at 1559-1579 (LSAILINVTITPWILVLTLPI) threads the bilayer. Topologically, residues 1580–1655 (CGAYYLIQKF…YALLNTSHRW (76 aa)) are extracellular. A helical transmembrane segment spans residues 1656 to 1676 (LGVSLDYLGGCIVFVATVTAL). Residues 1677–1718 (TAASVSCRRHYEATTSPSASASPSPFETYAVTKSPSELRPSP) are Cytoplasmic-facing. The chain crosses the membrane as a helical span at residues 1719 to 1739 (SLVGLAINYTLLVPIYLNWVV). The Extracellular segment spans residues 1740-2171 (KLLADMEMYA…GLLEKGASKW (432 aa)). Residues 1766 to 1778 (ADADADADADVDA) are compositionally biased toward acidic residues. 2 disordered regions span residues 1766 to 1844 (ADAD…GHEN) and 1866 to 1902 (NFHHPPATAGDKVEQATTKTSVIKDKQLPPQQDDKDK). Composition is skewed to basic and acidic residues over residues 1793-1804 (EVDRSSQSDAGD) and 1887-1902 (VIKDKQLPPQQDDKDK). Positions 1930–2165 (IHFDNVSLRY…EGSVFRGLLE (236 aa)) constitute an ABC transporter 2 domain. 1964–1971 (GRTGSGKS) contacts ATP.

Belongs to the ABC transporter superfamily. ABCC family. Conjugate transporter (TC 3.A.1.208) subfamily. As to expression, highly expressed in adult heart. Detected at lower levels in head and abdomen.

It is found in the membrane. Its function is as follows. May function as regulatory subunit of ATP-sensitive potassium channels (KATP) and form KATP channels with a member of the ATP-sensitive inward rectifier potassium channel family. May also have channel activity by itself (in vitro). May protect the heart during hypoxia. May protect against heart failure under conditions of tachycardic stress. This is ATP-binding cassette sub-family C member Sur (Sur) from Drosophila melanogaster (Fruit fly).